Reading from the N-terminus, the 242-residue chain is UPF0309 protein BOV_A0853 (242 aa).

Positions 30 to 209 constitute an SIS domain; sequence AADLIAAAAR…FADVAARLVG (180 aa).

This sequence belongs to the UPF0309 family.

This is UPF0309 protein BOV_A0853 from Brucella ovis (strain ATCC 25840 / 63/290 / NCTC 10512).